We begin with the raw amino-acid sequence, 202 residues long: ATP-dependent Clp protease proteolytic subunit (202 aa).

The active-site Nucleophile is the Ser-106. His-131 is a catalytic residue.

The protein belongs to the peptidase S14 family. In terms of assembly, fourteen ClpP subunits assemble into 2 heptameric rings which stack back to back to give a disk-like structure with a central cavity, resembling the structure of eukaryotic proteasomes.

Its subcellular location is the cytoplasm. The catalysed reaction is Hydrolysis of proteins to small peptides in the presence of ATP and magnesium. alpha-casein is the usual test substrate. In the absence of ATP, only oligopeptides shorter than five residues are hydrolyzed (such as succinyl-Leu-Tyr-|-NHMec, and Leu-Tyr-Leu-|-Tyr-Trp, in which cleavage of the -Tyr-|-Leu- and -Tyr-|-Trp bonds also occurs).. Cleaves peptides in various proteins in a process that requires ATP hydrolysis. Has a chymotrypsin-like activity. Plays a major role in the degradation of misfolded proteins. This chain is ATP-dependent Clp protease proteolytic subunit, found in Shewanella oneidensis (strain ATCC 700550 / JCM 31522 / CIP 106686 / LMG 19005 / NCIMB 14063 / MR-1).